Here is a 1020-residue protein sequence, read N- to C-terminus: Sodium/potassium-transporting ATPase subunit alpha-2 (1020 aa).

The propeptide occupies 1–5; the sequence is MGRGA. The interval 1 to 31 is disordered; the sequence is MGRGAGREYSPAATTAENGGGKKKQKEKELD. Residues 6–85 lie on the Cytoplasmic side of the membrane; the sequence is GREYSPAATT…NALTPPPTTP (80 aa). Ser-10 is subject to Phosphoserine. The segment at 80–82 is interaction with phosphoinositide-3 kinase; it reads PPP. The chain crosses the membrane as a helical span at residues 86–106; that stretch reads EWVKFCRQLFGGFSILLWIGA. The Extracellular segment spans residues 107 to 129; that stretch reads ILCFLAYGIQAAMEDEPSNDNLY. The chain crosses the membrane as a helical span at residues 130-150; sequence LGVVLAAVVIVTGCFSYYQEA. Residues 151–286 lie on the Cytoplasmic side of the membrane; it reads KSSKIMDSFK…VGRTPIAMEI (136 aa). Residues 212–227 are compositionally biased toward polar residues; that stretch reads DNSSLTGESEPQTRSP. Residues 212–231 form a disordered region; the sequence is DNSSLTGESEPQTRSPEFTH. A helical transmembrane segment spans residues 287 to 306; it reads EHFIQLITGVAVFLGVSFFV. At 307–318 the chain is on the extracellular side; the sequence is LSLILGYSWLEA. A helical transmembrane segment spans residues 319 to 336; that stretch reads VIFLIGIIVANVPEGLLA. Residues 337-769 lie on the Cytoplasmic side of the membrane; it reads TVTVCLTLTA…EEGRLIFDNL (433 aa). The 4-aspartylphosphate intermediate role is filled by Asp-374. Ser-439, Ser-450, and Ser-559 each carry phosphoserine. Thr-570 is subject to Phosphothreonine. Phosphoserine occurs at positions 587 and 672. The Mg(2+) site is built by Asp-714 and Asp-718. A helical transmembrane segment spans residues 770-789; it reads KKSIAYTLTSNIPEITPFLL. Over 790–799 the chain is Extracellular; it reads FIIANIPLPL. A helical transmembrane segment spans residues 800–820; it reads GTVTILCIDLGTDMVPAISLA. Over 821–840 the chain is Cytoplasmic; it reads YEAAESDIMKRQPRNPQTDK. Phosphoserine is present on Ser-826. A helical transmembrane segment spans residues 841-863; sequence LVNERLISMAYGQIGMIQALGGF. The Extracellular segment spans residues 864–915; it reads FTYFVILAENGFLPSRLLGIRLDWDDRSMNDLEDSYGQEWTYEQRKVVEFTC. Residues 916–935 form a helical membrane-spanning segment; that stretch reads HTAFFASIVVVQWADLIICK. Over 936 to 948 the chain is Cytoplasmic; it reads TRRNSVFQQGMKN. Residue Ser-940 is modified to Phosphoserine; by PKA. Residues 949 to 967 form a helical membrane-spanning segment; sequence KILIFGLLEETALAAFLSY. The Extracellular segment spans residues 968–982; that stretch reads CPGMGVALRMYPLKV. The chain crosses the membrane as a helical span at residues 983 to 1003; the sequence is TWWFCAFPYSLLIFIYDEVRK. Topologically, residues 1004-1020 are cytoplasmic; it reads LILRRYPGGWVEKETYY.

It belongs to the cation transport ATPase (P-type) (TC 3.A.3) family. Type IIC subfamily. The sodium/potassium-transporting ATPase is composed of a catalytic alpha subunit, an auxiliary non-catalytic beta subunit and an additional regulatory subunit. Interacts with regulatory subunit FXYD1.

The protein localises to the membrane. It localises to the cell membrane. The enzyme catalyses K(+)(out) + Na(+)(in) + ATP + H2O = K(+)(in) + Na(+)(out) + ADP + phosphate + H(+). Functionally, this is the catalytic component of the active enzyme, which catalyzes the hydrolysis of ATP coupled with the exchange of sodium and potassium ions across the plasma membrane. This action creates the electrochemical gradient of sodium and potassium, providing the energy for active transport of various nutrients. In Sus scrofa (Pig), this protein is Sodium/potassium-transporting ATPase subunit alpha-2 (ATP1A2).